A 132-amino-acid chain; its full sequence is Small ribosomal subunit protein uS8 (132 aa).

Belongs to the universal ribosomal protein uS8 family. In terms of assembly, part of the 30S ribosomal subunit. Contacts proteins S5 and S12.

One of the primary rRNA binding proteins, it binds directly to 16S rRNA central domain where it helps coordinate assembly of the platform of the 30S subunit. The polypeptide is Small ribosomal subunit protein uS8 (Cereibacter sphaeroides (strain ATCC 17029 / ATH 2.4.9) (Rhodobacter sphaeroides)).